Reading from the N-terminus, the 601-residue chain is ATP-dependent lipid A-core flippase (601 aa).

Helical transmembrane passes span 26–46 (VGLF…QPML), 82–102 (LMIV…NYFL), 167–187 (VFLF…MVAI), and 263–283 (VYTP…LFLV). The 292-residue stretch at 30–321 (AVSILGYVIF…LSEVSSTIQR (292 aa)) folds into the ABC transmembrane type-1 domain. The ABC transporter domain maps to 353–589 (IEVRDLSFRY…GGHYARLHAM (237 aa)). Residue 387–394 (GRSGSGKS) participates in ATP binding.

The protein belongs to the ABC transporter superfamily. Lipid exporter (TC 3.A.1.106) family. Homodimer.

The protein localises to the cell inner membrane. The enzyme catalyses ATP + H2O + lipid A-core oligosaccharideSide 1 = ADP + phosphate + lipid A-core oligosaccharideSide 2.. In terms of biological role, involved in lipopolysaccharide (LPS) biosynthesis. Translocates lipid A-core from the inner to the outer leaflet of the inner membrane. Transmembrane domains (TMD) form a pore in the inner membrane and the ATP-binding domain (NBD) is responsible for energy generation. The polypeptide is ATP-dependent lipid A-core flippase (Aromatoleum aromaticum (strain DSM 19018 / LMG 30748 / EbN1) (Azoarcus sp. (strain EbN1))).